Here is a 135-residue protein sequence, read N- to C-terminus: Glutaredoxin-C4 (135 aa).

Residues 32 to 132 form the Glutaredoxin domain; the sequence is ADFVKKTISS…KLLGVSGNKE (101 aa). C52 and C55 form a disulfide bridge.

It belongs to the glutaredoxin family. CPYC subfamily.

Its subcellular location is the cytoplasm. Its function is as follows. Has a glutathione-disulfide oxidoreductase activity in the presence of NADPH and glutathione reductase. Reduces low molecular weight disulfides and proteins. This chain is Glutaredoxin-C4 (GRXC4), found in Arabidopsis thaliana (Mouse-ear cress).